We begin with the raw amino-acid sequence, 367 residues long: Heme A synthase (367 aa).

The next 8 helical transmembrane spans lie at 25–45, 111–131, 139–159, 174–194, 210–230, 272–292, 305–325, and 327–347; these read ALRL…LVGG, LIAR…WLTG, WPLV…WWMV, LATH…IMRG, GLAA…ALVA, FIHR…MVIA, AVLL…TLLM, and VPLH…GFAV. Heme is bound at residue histidine 274. Residue histidine 335 coordinates heme.

It belongs to the COX15/CtaA family. Type 2 subfamily. In terms of assembly, interacts with CtaB. Requires heme b as cofactor.

It localises to the cell membrane. It carries out the reaction Fe(II)-heme o + 2 A + H2O = Fe(II)-heme a + 2 AH2. It functions in the pathway porphyrin-containing compound metabolism; heme A biosynthesis; heme A from heme O: step 1/1. Its function is as follows. Catalyzes the conversion of heme O to heme A by two successive hydroxylations of the methyl group at C8. The first hydroxylation forms heme I, the second hydroxylation results in an unstable dihydroxymethyl group, which spontaneously dehydrates, resulting in the formyl group of heme A. In Rhizobium etli (strain ATCC 51251 / DSM 11541 / JCM 21823 / NBRC 15573 / CFN 42), this protein is Heme A synthase.